The primary structure comprises 1131 residues: Probable chloride channel protein UM03490-D (1131 aa).

A run of 12 helical transmembrane segments spans residues 137-157 (GVIV…SLAT), 206-226 (VTVT…PILP), 305-325 (FPAW…CAHL), 341-361 (IKCI…TLAI), 380-397 (GPAV…ASFF), 414-434 (SSAA…LFSL), 485-505 (FEIM…AFVI), 518-538 (YLVK…AFVG), 577-597 (MVNS…VSYG), 603-623 (GIFV…GILV), 643-663 (VPCI…LAGV), and 680-702 (ALTY…DWFS). Disordered stretches follow at residues 815-835 (DGVE…LSVA) and 858-928 (ATGA…AGGG). The segment covering 866-877 (GLGSTSATGVAS) has biased composition (low complexity). One can recognise a CBS domain in the interval 944-1000 (IDPTPLIVQPGMPLETVMDMFKNLGPRVILVVEYGRLSGLVTVKDVLKRIAMQEKAE). The segment covering 1061-1078 (RASASRGGAPGSQAGQAR) has biased composition (low complexity). The tract at residues 1061 to 1131 (RASASRGGAP…VLGAQDDDDE (71 aa)) is disordered. Over residues 1104–1113 (STRQTSATKN) the composition is skewed to polar residues.

It belongs to the chloride channel (TC 2.A.49) family.

The protein localises to the membrane. Its function is as follows. Voltage-gated chloride channel. The protein is Probable chloride channel protein UM03490-D of Mycosarcoma maydis (Corn smut fungus).